Reading from the N-terminus, the 258-residue chain is Phosphoribosylaminoimidazole-succinocarboxamide synthase (258 aa).

Belongs to the SAICAR synthetase family.

It catalyses the reaction 5-amino-1-(5-phospho-D-ribosyl)imidazole-4-carboxylate + L-aspartate + ATP = (2S)-2-[5-amino-1-(5-phospho-beta-D-ribosyl)imidazole-4-carboxamido]succinate + ADP + phosphate + 2 H(+). The protein operates within purine metabolism; IMP biosynthesis via de novo pathway; 5-amino-1-(5-phospho-D-ribosyl)imidazole-4-carboxamide from 5-amino-1-(5-phospho-D-ribosyl)imidazole-4-carboxylate: step 1/2. This chain is Phosphoribosylaminoimidazole-succinocarboxamide synthase, found in Sphingopyxis alaskensis (strain DSM 13593 / LMG 18877 / RB2256) (Sphingomonas alaskensis).